The primary structure comprises 350 residues: Ketol-acid reductoisomerase (NADP(+)) (350 aa).

Residues 3–183 form the KARI N-terminal Rossmann domain; it reads AQIWYEDDGD…GALRAGAIKT (181 aa). Residues 26-29, arginine 49, serine 52, serine 54, and 84-87 contribute to the NADP(+) site; these read YGSQ and DQYQ. Histidine 109 is a catalytic residue. Residue glycine 135 coordinates NADP(+). One can recognise a KARI C-terminal knotted domain in the interval 184-327; that stretch reads TFKEETETDL…PKLRAMFSWN (144 aa). Mg(2+) is bound by residues aspartate 192, glutamate 196, glutamate 228, and glutamate 232. Serine 253 is a binding site for substrate.

The protein belongs to the ketol-acid reductoisomerase family. Mg(2+) serves as cofactor.

It catalyses the reaction (2R)-2,3-dihydroxy-3-methylbutanoate + NADP(+) = (2S)-2-acetolactate + NADPH + H(+). The catalysed reaction is (2R,3R)-2,3-dihydroxy-3-methylpentanoate + NADP(+) = (S)-2-ethyl-2-hydroxy-3-oxobutanoate + NADPH + H(+). It participates in amino-acid biosynthesis; L-isoleucine biosynthesis; L-isoleucine from 2-oxobutanoate: step 2/4. The protein operates within amino-acid biosynthesis; L-valine biosynthesis; L-valine from pyruvate: step 2/4. In terms of biological role, involved in the biosynthesis of branched-chain amino acids (BCAA). Catalyzes an alkyl-migration followed by a ketol-acid reduction of (S)-2-acetolactate (S2AL) to yield (R)-2,3-dihydroxy-isovalerate. In the isomerase reaction, S2AL is rearranged via a Mg-dependent methyl migration to produce 3-hydroxy-3-methyl-2-ketobutyrate (HMKB). In the reductase reaction, this 2-ketoacid undergoes a metal-dependent reduction by NADPH to yield (R)-2,3-dihydroxy-isovalerate. The polypeptide is Ketol-acid reductoisomerase (NADP(+)) (Bifidobacterium animalis subsp. lactis (strain AD011)).